We begin with the raw amino-acid sequence, 340 residues long: Selenide, water dikinase (340 aa).

Residue Cys13 is part of the active site. Residues Lys16 and 43–45 (ASD) each bind ATP. Mg(2+) is bound at residue Asp46. ATP is bound by residues Asp63, Asp86, and 133–135 (GHS). Asp86 serves as a coordination point for Mg(2+). Asp221 is a Mg(2+) binding site.

This sequence belongs to the selenophosphate synthase 1 family. Class I subfamily. As to quaternary structure, homodimer. It depends on Mg(2+) as a cofactor.

The catalysed reaction is hydrogenselenide + ATP + H2O = selenophosphate + AMP + phosphate + 2 H(+). Its function is as follows. Synthesizes selenophosphate from selenide and ATP. This chain is Selenide, water dikinase, found in Desulfitobacterium hafniense (strain DSM 10664 / DCB-2).